The primary structure comprises 156 residues: Cyclic pyranopterin monophosphate synthase (156 aa).

Residues 75–77 (LCH) and 111–112 (ME) each bind substrate. Residue aspartate 126 is part of the active site.

The protein belongs to the MoaC family. Homohexamer; trimer of dimers.

It catalyses the reaction (8S)-3',8-cyclo-7,8-dihydroguanosine 5'-triphosphate = cyclic pyranopterin phosphate + diphosphate. It functions in the pathway cofactor biosynthesis; molybdopterin biosynthesis. In terms of biological role, catalyzes the conversion of (8S)-3',8-cyclo-7,8-dihydroguanosine 5'-triphosphate to cyclic pyranopterin monophosphate (cPMP). This chain is Cyclic pyranopterin monophosphate synthase, found in Corynebacterium glutamicum (strain R).